Consider the following 435-residue polypeptide: UDP-N-acetylmuramate--L-alanine ligase (435 aa).

108–114 (GSHGKTS) is an ATP binding site.

The protein belongs to the MurCDEF family.

The protein localises to the cytoplasm. It catalyses the reaction UDP-N-acetyl-alpha-D-muramate + L-alanine + ATP = UDP-N-acetyl-alpha-D-muramoyl-L-alanine + ADP + phosphate + H(+). Its pathway is cell wall biogenesis; peptidoglycan biosynthesis. Functionally, cell wall formation. The protein is UDP-N-acetylmuramate--L-alanine ligase of Exiguobacterium sp. (strain ATCC BAA-1283 / AT1b).